The sequence spans 447 residues: Neuronal acetylcholine receptor subunit alpha-10 (447 aa).

The signal sequence occupies residues 1 to 24; it reads MGTRSHYLDLGFLLLLFLPAECLG. The Extracellular portion of the chain corresponds to 25–237; that stretch reads AEGRLAHKLF…FTLLLRRRAA (213 aa). 2 N-linked (GlcNAc...) asparagine glycosylation sites follow: asparagine 40 and asparagine 56. Intrachain disulfides connect cysteine 154–cysteine 168 and cysteine 218–cysteine 219. 3 consecutive transmembrane segments (helical) span residues 238–258, 268–288, and 302–322; these read AYVCNLLLPCVFISLLAPLAF, VSLGVTVLLALTVFQLILAES, and YMATMTMVTFSTALTILIMNL. Residues 323 to 425 lie on the Cytoplasmic side of the membrane; that stretch reads HYCGPNAHPV…WKRLARVMDR (103 aa). The chain crosses the membrane as a helical span at residues 426–446; that stretch reads FFLGIFFCMALVMSLIVLVQA.

This sequence belongs to the ligand-gated ion channel (TC 1.A.9) family. Acetylcholine receptor (TC 1.A.9.1) subfamily. Alpha-10/CHRNA10 sub-subfamily. As to quaternary structure, forms homo- or heterooligomeric channels in conjunction with CHRNA10. The native outer hair cell receptor may be composed of CHRNA9:CHRNA10 heterooligomers. Found in the stoichiometric form (CHRNA9)2:(CHRNA10)3. As to expression, expressed in the outer hair cells of the cochlea and the neurons of dorsal root ganglia.

It localises to the synaptic cell membrane. The protein localises to the cell membrane. It catalyses the reaction Ca(2+)(in) = Ca(2+)(out). It carries out the reaction Mg(2+)(in) = Mg(2+)(out). The catalysed reaction is K(+)(in) = K(+)(out). The enzyme catalyses Na(+)(in) = Na(+)(out). Its activity is regulated as follows. Activated by a myriad of ligands such as acetylcholine. AChR activity is inhibited by the antagonist alpha-conotoxins RgIA and GeXXA, small disulfide-constrained peptides from cone snails. Component of neuronal acetylcholine receptors (nAChRs) that function as pentameric, ligand-gated cation channels with high calcium permeability among other activities. nAChRs are excitatory neurotrasnmitter receptors formed by a collection of nAChR subunits known to mediate synaptic transmission in the nervous system and the neuromuscular junction. Each nAchR subunit confers differential attributes to channel properties, including activation, deactivation and desensitization kinetics, pH sensitivity, cation permeability, and binding to allosteric modulators. Forms heteropentamers with CHRNA9. Expressed in the inner ear, in sympathetic neurons and in other non-neuronal cells, such as skin keratinocytes and lymphocytes. nAChR formed by CHRNA9:CHRNA10 mediate central nervous system control of auditory and vestibular sensory processing. The channel is permeable to a range of divalent cations including calcium, the influx of which may activate a potassium current which hyperpolarizes the cell membrane. In the ear, mediates synaptic transmission between efferent olivocochlear fibers and hair cells of the cochlea, this may lead to a reduction in basilar membrane motion, altering the activity of auditory nerve fibers and reducing the range of dynamic hearing. This may protect against acoustic trauma. May also regulate keratinocyte adhesion. This chain is Neuronal acetylcholine receptor subunit alpha-10 (Chrna10), found in Rattus norvegicus (Rat).